A 156-amino-acid chain; its full sequence is UPF0336 protein SACE_6876 (156 aa).

The MaoC-like domain maps to 8 to 128; that stretch reads IGREYPPTPA…DFLTVRAEIT (121 aa).

Belongs to the UPF0336 family.

The protein is UPF0336 protein SACE_6876 of Saccharopolyspora erythraea (strain ATCC 11635 / DSM 40517 / JCM 4748 / NBRC 13426 / NCIMB 8594 / NRRL 2338).